Here is a 291-residue protein sequence, read N- to C-terminus: Inactive dihydropteroate synthase 2 (291 aa).

One can recognise a Pterin-binding domain in the interval 15-272 (QLIMAIVNRT…EVVATRRVLE (258 aa)).

Belongs to the DHPS family. Homodimer.

Has very low affinity for the DHPS substrate 6-hydroxymethyl-7,8-dihydropterin-pyrophosphate, but can bind the inhibitor dapsone. Seems to lack dihydropteroate synthase activity, and does probably not function in folate metabolism. In Mycobacterium leprae (strain TN), this protein is Inactive dihydropteroate synthase 2 (folP2).